The sequence spans 297 residues: HTH-type transcriptional regulator ArgP (297 aa).

The HTH lysR-type domain maps to 2–58 (FDYKLLSALAAVVEQAGFERAAQVLGLSQSAISQRIKLLEARVGQPVLVRGTPPSPT). Residues 19–38 (FERAAQVLGLSQSAISQRIK) constitute a DNA-binding region (H-T-H motif).

This sequence belongs to the LysR transcriptional regulatory family. Homodimer.

Its function is as follows. Controls the transcription of genes involved in arginine and lysine metabolism. The polypeptide is HTH-type transcriptional regulator ArgP (Pseudomonas fluorescens (strain Pf0-1)).